Consider the following 458-residue polypeptide: NADH-ubiquinone oxidoreductase chain 4 (458 aa).

Transmembrane regions (helical) follow at residues 21–43 (ASLW…QWLN), 58–78 (IDQI…LMLL), 93–112 (RTFI…AFSA), 116–138 (TLFY…RWGN), 145–165 (AGIY…VTIL), 196–216 (GLAL…HLWL), 224–244 (PIAG…YGIM), 257–277 (LSYP…SICL), 285–305 (LIAY…MIQT), 309–329 (FSGA…LFCL), 341–361 (ILLL…WWLL), and 379–399 (LTIM…TGLA).

Belongs to the complex I subunit 4 family.

Its subcellular location is the mitochondrion membrane. The enzyme catalyses a ubiquinone + NADH + 5 H(+)(in) = a ubiquinol + NAD(+) + 4 H(+)(out). Functionally, core subunit of the mitochondrial membrane respiratory chain NADH dehydrogenase (Complex I) that is believed to belong to the minimal assembly required for catalysis. Complex I functions in the transfer of electrons from NADH to the respiratory chain. The immediate electron acceptor for the enzyme is believed to be ubiquinone. This is NADH-ubiquinone oxidoreductase chain 4 (MT-ND4) from Struthio camelus (Common ostrich).